Consider the following 559-residue polypeptide: Glucose-6-phosphate isomerase 4 (559 aa).

Catalysis depends on Glu-356, which acts as the Proton donor. Active-site residues include His-387 and Lys-513.

This sequence belongs to the GPI family.

It localises to the cytoplasm. It catalyses the reaction alpha-D-glucose 6-phosphate = beta-D-fructose 6-phosphate. It functions in the pathway carbohydrate biosynthesis; gluconeogenesis. The protein operates within carbohydrate degradation; glycolysis; D-glyceraldehyde 3-phosphate and glycerone phosphate from D-glucose: step 2/4. In terms of biological role, catalyzes the reversible isomerization of glucose-6-phosphate to fructose-6-phosphate. The sequence is that of Glucose-6-phosphate isomerase 4 from Rhodococcus jostii (strain RHA1).